Here is a 140-residue protein sequence, read N- to C-terminus: PDZ domain-containing protein 11 (140 aa).

A PDZ domain is found at 47–129 (IVTLKKPPGA…ISMRVRFFPY (83 aa)).

As to quaternary structure, interacts with ATP2B1, ATP2B2, ATP2B3, ATP2B4 and ATP7A. Interacts with PLEKHA7 (via WW domains) at zonula adherens; this interaction is essential for the interaction between PLEKHA7 and the ADAM10-binding protein TSPAN33. Interacts with SLC5A6.

The protein localises to the cytoplasm. Its subcellular location is the cell junction. It localises to the adherens junction. It is found in the cell membrane. Functionally, mediates docking of ADAM10 to zonula adherens by interacting with PLEKHA7 which is required for PLEKHA7 to interact with the ADAM10-binding protein TSPAN33. This Mus musculus (Mouse) protein is PDZ domain-containing protein 11 (Pdzd11).